Consider the following 319-residue polypeptide: Lambda-crystallin homolog (319 aa).

N-acetylalanine is present on A2. S3 is subject to Phosphoserine. NAD(+) is bound by residues 16 to 17 (LI), D36, E97, and K102.

This sequence belongs to the 3-hydroxyacyl-CoA dehydrogenase family. As to quaternary structure, homodimer.

The protein localises to the cytoplasm. It catalyses the reaction L-gulonate + NAD(+) = 3-dehydro-L-gulonate + NADH + H(+). Inhibited by malonate. Has high L-gulonate 3-dehydrogenase activity. It also exhibits low dehydrogenase activity toward L-3-hydroxybutyrate (HBA) and L-threonate. This chain is Lambda-crystallin homolog (Cryl1), found in Rattus norvegicus (Rat).